We begin with the raw amino-acid sequence, 209 residues long: Small ribosomal subunit protein uS4 (209 aa).

The region spanning 98 to 161 is the S4 RNA-binding domain; that stretch reads ARLDNVVYRM…RDLEVIKKAV (64 aa).

The protein belongs to the universal ribosomal protein uS4 family. In terms of assembly, part of the 30S ribosomal subunit. Contacts protein S5. The interaction surface between S4 and S5 is involved in control of translational fidelity.

Its function is as follows. One of the primary rRNA binding proteins, it binds directly to 16S rRNA where it nucleates assembly of the body of the 30S subunit. Functionally, with S5 and S12 plays an important role in translational accuracy. This is Small ribosomal subunit protein uS4 from Thermotoga petrophila (strain ATCC BAA-488 / DSM 13995 / JCM 10881 / RKU-1).